The following is a 427-amino-acid chain: Zinc finger protein 134 (427 aa).

Lys20 participates in a covalent cross-link: Glycyl lysine isopeptide (Lys-Gly) (interchain with G-Cter in SUMO2). The C2H2-type 1 zinc-finger motif lies at 50–72; it reads LPCDICGPILKDILHLDEHQGTH. Residues 78 to 100 form a C2H2-type 2; degenerate zinc finger; that stretch reads HTCGACGRQFWFSANLHQYQKCY. Residues Lys135 and Lys139 each participate in a glycyl lysine isopeptide (Lys-Gly) (interchain with G-Cter in SUMO2) cross-link. 9 C2H2-type zinc fingers span residues 176-198, 204-226, 232-254, 260-282, 288-310, 316-338, 344-366, 372-394, and 400-422; these read YKCS…QRIH, YECS…QRIH, YECS…KRIH, YKCN…QRVH, YKCS…ESIH, YDCS…QRIH, FECI…QRVH, FVCS…QRVH, and YECS…QKVH.

The protein belongs to the krueppel C2H2-type zinc-finger protein family.

The protein localises to the nucleus. Its function is as follows. May be involved in transcriptional regulation. This is Zinc finger protein 134 (ZNF134) from Homo sapiens (Human).